The following is a 113-amino-acid chain: uncharacterized protein (113 aa).

This is an uncharacterized protein from Mycoplasma pneumoniae (strain ATCC 29342 / M129 / Subtype 1) (Mycoplasmoides pneumoniae).